Here is a 209-residue protein sequence, read N- to C-terminus: MPSLDYSQVTITALIASLAIGYLLGSIPFGLLLTRMAGLGDVRNIGSGNIGATNVLRTGNKKLAAATLLLDALKATAAALIAQKLFGSDTVHLPGLLGGFAAFIGHLFPVWLGFKGGKGVATYIGTLLGIFPLMVLVFAIVWLSIAFLSRYSSLSALVATLVIPVALWILGQPEAAMITSAMTVITWGKHKANIERLISGTESKIGKKG.

A run of 5 helical transmembrane segments spans residues 13–33, 63–83, 94–114, 127–147, and 151–171; these read ALIA…GLLL, LAAA…LIAQ, PGLL…WLGF, LLGI…SIAF, and YSSL…WILG.

It belongs to the PlsY family. As to quaternary structure, probably interacts with PlsX.

The protein localises to the cell inner membrane. It catalyses the reaction an acyl phosphate + sn-glycerol 3-phosphate = a 1-acyl-sn-glycero-3-phosphate + phosphate. It participates in lipid metabolism; phospholipid metabolism. Functionally, catalyzes the transfer of an acyl group from acyl-phosphate (acyl-PO(4)) to glycerol-3-phosphate (G3P) to form lysophosphatidic acid (LPA). This enzyme utilizes acyl-phosphate as fatty acyl donor, but not acyl-CoA or acyl-ACP. The polypeptide is Glycerol-3-phosphate acyltransferase (Allorhizobium ampelinum (strain ATCC BAA-846 / DSM 112012 / S4) (Agrobacterium vitis (strain S4))).